A 298-amino-acid polypeptide reads, in one-letter code: Cyclin-D4-2 (298 aa).

This sequence belongs to the cyclin family. Cyclin D subfamily. Interacts with CDKA-1 to form a kinase complex.

Functionally, may promote cell division. This is Cyclin-D4-2 (CYCD4-2) from Arabidopsis thaliana (Mouse-ear cress).